Here is a 406-residue protein sequence, read N- to C-terminus: Vacuole membrane protein 1 (406 aa).

Over residues 1–20 (MAENGKNCDQRRVAMNKEQH) the composition is skewed to basic and acidic residues. Residues 1-36 (MAENGKNCDQRRVAMNKEQHNGNFTDPSSVNEKKRR) form a disordered region. Position 2 is an N-acetylalanine (A2). The Cytoplasmic portion of the chain corresponds to 2 to 43 (AENGKNCDQRRVAMNKEQHNGNFTDPSSVNEKKRREREERQN). Over residues 21–30 (NGNFTDPSSV) the composition is skewed to polar residues. Residues 44–64 (IVLWRQPLITLQYFSLEILVI) traverse the membrane as a helical segment. The Extracellular portion of the chain corresponds to 65 to 77 (LKEWTSKLWHRQS). The helical transmembrane segment at 78-98 (IVVSFLLLLAVLIATYYVEGA) threads the bilayer. Residues 99 to 109 (HQQYVQRIEKQ) lie on the Cytoplasmic side of the membrane. A helical transmembrane segment spans residues 110–130 (FLLYAYWIGLGILSSVGLGTG). The Extracellular portion of the chain corresponds to 131 to 250 (LHTFLLYLGP…ASRAKLAVQK (120 aa)). The segment at 173-316 (GTEGTISLWS…FVIITFSKHI (144 aa)) is VTT domain. A helical transmembrane segment spans residues 251 to 271 (LVQKVGFFGILACASIPNPLF). Topologically, residues 272-273 (DL) are cytoplasmic. Residues 274–294 (AGITCGHFLVPFWTFFGATLI) form a helical membrane-spanning segment. Topologically, residues 295-305 (GKAIIKMHIQK) are extracellular. A helical transmembrane segment spans residues 306–326 (IFVIITFSKHIVEQMVAFIGA). Over 327 to 363 (VPGIGPSLQKPFQEYLEAQRQKLHHKSEMGTPQGENW) the chain is Cytoplasmic. The helical transmembrane segment at 364–384 (LSWMFEKLVVVMVCYFILSII) threads the bilayer. Topologically, residues 385-406 (NSMAQSYAKRIQQRLNSEEKTK) are extracellular.

It belongs to the VMP1 family. As to quaternary structure, interacts with BECN1. Interacts with TJP1. Interacts with TP53INP2. Interacts with TMEM41B. Interacts with ATP2A2, PLN and SLN; competes with PLN and SLN to prevent them from forming an inhibitory complex with ATP2A2. Interacts with ATG2A.

Its subcellular location is the endoplasmic reticulum-Golgi intermediate compartment membrane. The protein localises to the cell membrane. It is found in the vacuole membrane. The protein resides in the endoplasmic reticulum membrane. It carries out the reaction a 1,2-diacyl-sn-glycero-3-phospho-L-serine(in) = a 1,2-diacyl-sn-glycero-3-phospho-L-serine(out). The catalysed reaction is cholesterol(in) = cholesterol(out). The enzyme catalyses a 1,2-diacyl-sn-glycero-3-phosphocholine(in) = a 1,2-diacyl-sn-glycero-3-phosphocholine(out). It catalyses the reaction a 1,2-diacyl-sn-glycero-3-phosphoethanolamine(in) = a 1,2-diacyl-sn-glycero-3-phosphoethanolamine(out). Functionally, phospholipid scramblase involved in lipid homeostasis and membrane dynamics processes. Has phospholipid scramblase activity toward cholesterol and phosphatidylserine, as well as phosphatidylethanolamine and phosphatidylcholine. Required for autophagosome formation: participates in early stages of autophagosome biogenesis at the endoplasmic reticulum (ER) membrane by reequilibrating the leaflets of the ER as lipids are extracted by ATG2 (ATG2A or ATG2B) to mediate autophagosome assembly. Regulates ATP2A2 activity to control ER-isolation membrane contacts for autophagosome formation. In addition to autophagy, involved in other processes in which phospholipid scramblase activity is required. Modulates ER contacts with lipid droplets, mitochondria and endosomes. Plays an essential role in formation of cell junctions. Upon stress such as bacterial and viral infection, promotes formation of cytoplasmic vacuoles followed by cell death. Involved in the cytoplasmic vacuolization of acinar cells during the early stage of acute pancreatitis. The polypeptide is Vacuole membrane protein 1 (Pongo abelii (Sumatran orangutan)).